A 407-amino-acid polypeptide reads, in one-letter code: MKKLFSVKLSKSKVILVAACLLLAGSGTAYAAHELTKQSVSVSINGKKKHIRTHANTVGDLLETLDIKTRDEDKITPAKQTKITADMDVVYEAAKPVKLTINGEEKTLWSTAKTVGALLDEQDVDVKEQDQIDPAIDTDISKDMKINIEPAFQVTVNDAGKQKKIWTTSTTVADFLKQQKMNIKDEDKIKPALDAKLTKGKADITITRIEKVTDVVEEKIAFDVKKQEDASLEKGKEKVVQKGKEGKLKKHFEVVKENGKEVSRELVKEETAEQSKDKVIAVGTKQSSPKFETVSASGDSKTVVSRSNESTGKVMTVSSTAYTASCSGCSGHTATGVNLKNNPNAKVIAVDPNVIPLGSKVHVEGYGYAIAADTGSAIKGNKIDVFFPEKSSAYRWGNKTVKIKILN.

Residues Met1–Ala31 form the signal peptide. One can recognise a G5 domain in the interval Ile206–Gln286.

In terms of biological role, suggested to be involved in cell wall modification. This is Putative cell wall shaping protein YabE (yabE) from Bacillus subtilis (strain 168).